We begin with the raw amino-acid sequence, 323 residues long: o-succinylbenzoate synthase (323 aa).

Residue lysine 134 is the Proton donor of the active site. Residues aspartate 162, glutamate 191, and aspartate 214 each coordinate Mg(2+). Lysine 236 (proton acceptor) is an active-site residue.

This sequence belongs to the mandelate racemase/muconate lactonizing enzyme family. MenC type 1 subfamily. Requires a divalent metal cation as cofactor.

The catalysed reaction is (1R,6R)-6-hydroxy-2-succinyl-cyclohexa-2,4-diene-1-carboxylate = 2-succinylbenzoate + H2O. The protein operates within quinol/quinone metabolism; 1,4-dihydroxy-2-naphthoate biosynthesis; 1,4-dihydroxy-2-naphthoate from chorismate: step 4/7. It participates in quinol/quinone metabolism; menaquinone biosynthesis. In terms of biological role, converts 2-succinyl-6-hydroxy-2,4-cyclohexadiene-1-carboxylate (SHCHC) to 2-succinylbenzoate (OSB). This chain is o-succinylbenzoate synthase, found in Yersinia pseudotuberculosis serotype O:3 (strain YPIII).